Here is a 315-residue protein sequence, read N- to C-terminus: 4-hydroxy-3-methylbut-2-enyl diphosphate reductase (315 aa).

Residue Cys-12 coordinates [4Fe-4S] cluster. Positions 41 and 74 each coordinate (2E)-4-hydroxy-3-methylbut-2-enyl diphosphate. The dimethylallyl diphosphate site is built by His-41 and His-74. His-41 and His-74 together coordinate isopentenyl diphosphate. Cys-96 provides a ligand contact to [4Fe-4S] cluster. His-124 is a (2E)-4-hydroxy-3-methylbut-2-enyl diphosphate binding site. His-124 provides a ligand contact to dimethylallyl diphosphate. His-124 contacts isopentenyl diphosphate. Glu-126 (proton donor) is an active-site residue. Residue Thr-168 coordinates (2E)-4-hydroxy-3-methylbut-2-enyl diphosphate. Position 198 (Cys-198) interacts with [4Fe-4S] cluster. Residues Ser-226, Ser-227, Asn-228, and Ser-270 each coordinate (2E)-4-hydroxy-3-methylbut-2-enyl diphosphate. Residues Ser-226, Ser-227, Asn-228, and Ser-270 each coordinate dimethylallyl diphosphate. Residues Ser-226, Ser-227, Asn-228, and Ser-270 each contribute to the isopentenyl diphosphate site.

The protein belongs to the IspH family. Requires [4Fe-4S] cluster as cofactor.

The enzyme catalyses isopentenyl diphosphate + 2 oxidized [2Fe-2S]-[ferredoxin] + H2O = (2E)-4-hydroxy-3-methylbut-2-enyl diphosphate + 2 reduced [2Fe-2S]-[ferredoxin] + 2 H(+). The catalysed reaction is dimethylallyl diphosphate + 2 oxidized [2Fe-2S]-[ferredoxin] + H2O = (2E)-4-hydroxy-3-methylbut-2-enyl diphosphate + 2 reduced [2Fe-2S]-[ferredoxin] + 2 H(+). Its pathway is isoprenoid biosynthesis; dimethylallyl diphosphate biosynthesis; dimethylallyl diphosphate from (2E)-4-hydroxy-3-methylbutenyl diphosphate: step 1/1. The protein operates within isoprenoid biosynthesis; isopentenyl diphosphate biosynthesis via DXP pathway; isopentenyl diphosphate from 1-deoxy-D-xylulose 5-phosphate: step 6/6. In terms of biological role, catalyzes the conversion of 1-hydroxy-2-methyl-2-(E)-butenyl 4-diphosphate (HMBPP) into a mixture of isopentenyl diphosphate (IPP) and dimethylallyl diphosphate (DMAPP). Acts in the terminal step of the DOXP/MEP pathway for isoprenoid precursor biosynthesis. The chain is 4-hydroxy-3-methylbut-2-enyl diphosphate reductase from Pseudomonas putida (strain ATCC 700007 / DSM 6899 / JCM 31910 / BCRC 17059 / LMG 24140 / F1).